We begin with the raw amino-acid sequence, 1333 residues long: MSTSTATTSVITSNELSLSGHAHGHGHAHQLHQHTHSRLGVGVGVGILSDASLSPIQQGSGGHSGGGNTNSSPLAPNGVPLLTTMHRSPDSPQPELATMTNVNVLDLHTDNSKLYDKEAVFIYETPKVVMPADGGGGNNSDEGHAIDARIAAQMGNQAQQQQQQQQQTEHQPLAKIEFDENQIIRVVGPNGEQQQIISREIINGEHHILSRNEAGEHILTRIVSDPSKLMPNDNAVATAMYNQAQKMNNDHGQAVYQTSPLPLDASVLHYSGGNDSNVIKTEADIYEDHKKHAAAAAAAAGGGSIIYTTSDPNGVNVKQLPHLTVPQKLDPDLYQADKHIDLIYNDGSKTVIYSTTDQKSLEIYSGGDIGSLVSDGQVVVQAGLPYATTTGAGGQPVYIVADGALPAGVEEHLQSGKLNGQTTPIDVSGLSQNEIQGFLLGSHPSSSATVSTTGVVSTTTISHHQQQQQQQQQQQQQQQQQHQQQQQHPGDIVSAAGVGSTGSIVSSAAQQQQQQQLISIKREPEDLRKDPKNGNIAGAATANGPGSVITQKILHVDAPTASEADRPSTPSSSINSTENTESDSQSVSGSESGSPGARTTATLEMYATTGGTQIYLQTSHPSTASGAGGGAGPAGAAGGGGVSMQAQSPSPGPYITANDYGMYTASRLPPGPPPTSTTTFIAEPSYYREYFAPDGQGGYVPASTRSLYGDVDVSVSQPGGVVTYEGRFAGSVPPPATTTVLTSVHHHQQQQQQQQQHQQQQQQQQHHQQQQHHSQDGKSNGGATPLYAKAITAAGLTVDLPSPDSGIGTDAITPRDQTNIQQSFDYTELCQPGTLIDANGSIPVSVNSIQQRTAVHGSQNSPTTSLVDTSTNGSTRSRPWHDFGRQNDADKIQIPKIFTNVGFRYHLESPISSSQRREDDRITYINKGQFYGITLEYVHDAEKPIKNTTVKSVIMLMFREEKSPEDEIKAWQFWHSRQHSVKQRILDADTKNSVGLVGCIEEVSHNAIAVYWNPLESSAKINIAVQCLSTDFSSQKGVKGLPLHVQIDTFEDPRDTAVFHRGYCQIKVFCDKGAERKTRDEERRAAKRKMTATGRKKLDELYHPVTDRSEFYGMQDFAKPPVLFSPAEDMEKVGQLGIGAATGMTFNPLSNGNSNSNSHSSLQSFYGHETDSPDLKGASPFLLHGQKVATPTLKFHNHFPPDMQTDKKDHILDQNMLTSTPLTDFGPPMKRGRMTPPTSERVMLYVRQENEEVYTPLHVVPPTTIGLLNAIENKYKISTTSINNIYRTNKKGITAKIDDDMISFYCNEDIFLLEVQQIEDDLYDVTLTELPNQ.

5 disordered regions span residues 52-93 (SLSP…DSPQ), 439-598 (LLGS…PGAR), 617-655 (QTSH…GPYI), 727-784 (RFAG…GGAT), and 853-885 (TAVH…DFGR). Positions 59-68 (GSGGHSGGGN) are enriched in gly residues. Low complexity predominate over residues 445 to 488 (SSSATVSTTGVVSTTTISHHQQQQQQQQQQQQQQQQQHQQQQQH). Basic and acidic residues predominate over residues 520–532 (IKREPEDLRKDPK). Low complexity-rich tracts occupy residues 533-546 (NGNI…NGPG) and 567-596 (PSTP…GSPG). Residues 626–642 (GAGGGAGPAGAAGGGGV) show a composition bias toward gly residues. The segment covering 749–772 (QQQQQQQQHQQQQQQQQHHQQQQH) has biased composition (low complexity). Residues 853 to 877 (TAVHGSQNSPTTSLVDTSTNGSTRS) are compositionally biased toward polar residues. The Grh/CP2 DB domain occupies 899 to 1125 (TNVGFRYHLE…DFAKPPVLFS (227 aa)).

It belongs to the grh/CP2 family. Grainyhead subfamily. As to expression, restricted, during embryogenesis, to tissues derived from ectoderm, predominantly the central nervous system (CNS) and the epidermis.

The protein localises to the nucleus. Transcription factor that binds a CNS-specific regulatory element of the Dopa decarboxylase (Ddc) gene. Also interacts with sequences adjacent to other transcription units, including Ultrabithorax (Ubx) and engrailed (en). Activity in vivo may be required only at high levels transiently to activate the expression of Ddc in the CNS. In Drosophila melanogaster (Fruit fly), this protein is Protein grainyhead (grh).